A 1164-amino-acid polypeptide reads, in one-letter code: Phospholipid-transporting ATPase IA (1164 aa).

The Cytoplasmic segment spans residues 1 to 75 (MPTMRRTVSE…PRFLYSQFRR (75 aa)). Ser-25 bears the Phosphoserine mark. Thr-28 is subject to Phosphothreonine. Ser-29 is subject to Phosphoserine. A helical transmembrane segment spans residues 76 to 96 (AANSFFLFIALLQQIPDVSPT). The Exoplasmic loop portion of the chain corresponds to 97-100 (GRYT). The chain crosses the membrane as a helical span at residues 101–121 (TLVPLLFILAVAAIKEIIEDI). Topologically, residues 122-297 (KRHKADNAVN…SNVERITNVQ (176 aa)) are cytoplasmic. A helical transmembrane segment spans residues 298 to 318 (ILILFCILIAMSLVCSVGSAI). The Exoplasmic loop portion of the chain corresponds to 319-339 (WNRRHSGKDWYLHLHYGGASN). Residues 340–360 (FGLNFLTFIILFNNLIPISLL) form a helical membrane-spanning segment. Residues 361–866 (VTLEVVKFTQ…KCILYCFYKN (506 aa)) lie on the Cytoplasmic side of the membrane. Asp-409 (4-aspartylphosphate intermediate) is an active-site residue. The ATP site is built by Asp-409, Lys-410, and Thr-411. Asp-409 is a Mg(2+) binding site. Residue Thr-411 participates in Mg(2+) binding. A Phosphoserine modification is found at Ser-443. ATP-binding positions include Glu-508, Phe-549, Lys-572, Arg-605, Thr-685, Gly-686, Asp-687, 741–748 (ALIIDGKT), Arg-775, and Lys-781. Mg(2+) is bound at residue Asp-801. 2 residues coordinate ATP: Asn-804 and Asp-805. Mg(2+) is bound at residue Asp-805. A helical membrane pass occupies residues 867–887 (IVLYIIEIWFAFVNGFSGQIL). Topologically, residues 888-890 (FER) are exoplasmic loop. A helical transmembrane segment spans residues 891 to 911 (WCIGLYNVMFTAMPPLTLGIF). Topologically, residues 912-939 (ERSCRKENMLKYPELYKTSQNALDFNTK) are cytoplasmic. The helical transmembrane segment at 940-960 (VFWVHCLNGLFHSVILFWFPL) threads the bilayer. Residues 961–977 (KALQYGTVFGNGKTSDY) lie on the Exoplasmic loop side of the membrane. The helical transmembrane segment at 978-998 (LLLGNFVYTFVVITVCLKAGL) threads the bilayer. The Cytoplasmic portion of the chain corresponds to 999-1008 (ETSYWTWFSH). A helical membrane pass occupies residues 1009–1029 (IAIWGSIALWVVFFGIYSSLW). The Exoplasmic loop segment spans residues 1030–1044 (PAVPMAPDMSGEAAM). Residues 1045–1065 (LFSSGVFWVGLLSIPVASLLL) form a helical membrane-spanning segment. Residues 1066–1164 (DVLYKVIKRT…DTTKQRPDEW (99 aa)) lie on the Cytoplasmic side of the membrane. ATP is bound at residue 1095-1102 (GAVVLGKS). Position 1126 is a phosphoserine (Ser-1126).

Belongs to the cation transport ATPase (P-type) (TC 3.A.3) family. Type IV subfamily. In terms of assembly, component of a P4-ATPase flippase complex which consists of a catalytic alpha subunit and an accessory beta subunit. Interacts with TMEM30A to form a flippase complex; this complex forms an intermediate phosphoenzyme. Interacts with TMEM30B; this interaction is reported conflictingly. Mg(2+) serves as cofactor. In terms of processing, cleaved by calpain in a caspase- and calcium influx-dependent manner only during platelet apoptosis and may lead to inactivation. In terms of tissue distribution, found in most tissues except liver and testis. Most abundant in brain and lung. Also detected in fetal tissues. Isoform 1 is expressed in brain. Isoform 2 and isoform 3 are expressed in reticulocytes. Expressed in mouse hippocampus in both dentate gyrus (DG) and the CA3 regions. Expressed in both neuronal as well as non-neuronal cells within the DG. Highly expressed in platelets.

Its subcellular location is the cytoplasmic vesicle. The protein localises to the secretory vesicle. It is found in the chromaffin granule membrane. The protein resides in the cytoplasmic granule. It localises to the cell membrane. Its subcellular location is the endoplasmic reticulum. The protein localises to the golgi apparatus. It is found in the endomembrane system. It carries out the reaction ATP + H2O + phospholipidSide 1 = ADP + phosphate + phospholipidSide 2.. The enzyme catalyses a 1,2-diacyl-sn-glycero-3-phospho-L-serine(out) + ATP + H2O = a 1,2-diacyl-sn-glycero-3-phospho-L-serine(in) + ADP + phosphate + H(+). With respect to regulation, ATPase activity is stimulated by phosphatidylserine (PS) and minimally by phosphatidylethanolamine (PE). ATPase activity is inhibited by the vanadate and by the presence of calcium. In terms of biological role, catalytic component of a P4-ATPase flippase complex which catalyzes the hydrolysis of ATP coupled to the transport of aminophospholipids from the outer to the inner leaflet of various membranes and ensures the maintenance of asymmetric distribution of phospholipids. Phospholipid translocation also seems to be implicated in vesicle formation and in uptake of lipid signaling molecules. In vitro, its ATPase activity is selectively and stereospecifically stimulated by phosphatidylserine (PS). The flippase complex ATP8A1:TMEM30A seems to play a role in regulation of cell migration probably involving flippase-mediated translocation of phosphatidylethanolamine (PE) at the cell membrane. Acts as aminophospholipid translocase at the cell membrane in neuronal cells; the activity is associated with hippocampus-dependent learning. May play a role in brain connectivity. The polypeptide is Phospholipid-transporting ATPase IA (Mus musculus (Mouse)).